A 419-amino-acid chain; its full sequence is Protein arginine N-methyltransferase 8-B (419 aa).

Basic residues predominate over residues 1–14; the sequence is MGLRHSSRCLLLRR. The tract at residues 1–79 is disordered; that stretch reads MGLRHSSRCL…HTPHVSALSA (79 aa). Gly-2 carries N-myristoyl glycine lipidation. The segment covering 33-63 has biased composition (low complexity); the sequence is QHQQQQSISSIPSSQSLQPSPLPKPVTSVHH. At Arg-83 the chain carries Omega-N-methylarginine. Arg-98 is modified (asymmetric dimethylarginine). Residues 98-402 enclose the SAM-dependent MTase PRMT-type domain; sequence RDYYFDSYAH…RDLDFTFELD (305 aa). S-adenosyl-L-methionine-binding positions include His-111, Arg-120, Gly-144, 144 to 147, Glu-166, and Glu-195; that span reads GSGT. Residues Glu-210 and Glu-219 contribute to the active site.

It belongs to the class I-like SAM-binding methyltransferase superfamily. Protein arginine N-methyltransferase family. PRMT8 subfamily. As to quaternary structure, homodimer. Tetramer; individual homodimers associates to form a homotetramer. Homooctamer; individual homodimers associates to form a homooctamer and homooligomerization is required for proper localization to the cell membrane.

The protein localises to the cell membrane. The catalysed reaction is L-arginyl-[protein] + S-adenosyl-L-methionine = N(omega)-methyl-L-arginyl-[protein] + S-adenosyl-L-homocysteine + H(+). It carries out the reaction L-arginyl-[protein] + 2 S-adenosyl-L-methionine = N(omega),N(omega)-dimethyl-L-arginyl-[protein] + 2 S-adenosyl-L-homocysteine + 2 H(+). Its function is as follows. S-adenosyl-L-methionine-dependent and membrane-associated arginine methyltransferase that can both catalyze the formation of omega-N monomethylarginine (MMA) and asymmetrical dimethylarginine (aDMA). This Danio rerio (Zebrafish) protein is Protein arginine N-methyltransferase 8-B (prmt8b).